We begin with the raw amino-acid sequence, 383 residues long: Putative [LysW]-aminoadipate semialdehyde/glutamate semialdehyde transaminase (383 aa).

Pyridoxal 5'-phosphate is bound by residues glycine 97 to threonine 98 and phenylalanine 124. Arginine 127 serves as a coordination point for substrate. Pyridoxal 5'-phosphate is bound at residue aspartate 209 to glutamine 212. Lysine 238 carries the post-translational modification N6-(pyridoxal phosphate)lysine. Serine 266 lines the substrate pocket. Threonine 267 contributes to the pyridoxal 5'-phosphate binding site.

It belongs to the class-III pyridoxal-phosphate-dependent aminotransferase family. LysJ subfamily. In terms of assembly, homodimer. Pyridoxal 5'-phosphate is required as a cofactor.

The protein resides in the cytoplasm. The catalysed reaction is [amino-group carrier protein]-C-terminal-gamma-(L-lysyl)-L-glutamate + 2-oxoglutarate = [amino-group carrier protein]-C-terminal-N-(1-carboxy-5-oxopentan-1-yl)-L-glutamine + L-glutamate. The enzyme catalyses [amino-group carrier protein]-C-terminal-gamma-(L-ornithyl)-L-glutamate + 2-oxoglutarate = [amino-group carrier protein]-C-terminal-gamma-(L-glutamyl-5-semialdehyde)-L-glutamate + L-glutamate. It functions in the pathway amino-acid biosynthesis; L-lysine biosynthesis via AAA pathway; L-lysine from L-alpha-aminoadipate (Thermus route): step 4/5. Its pathway is amino-acid biosynthesis; L-arginine biosynthesis. Involved in both the arginine and lysine biosynthetic pathways. The chain is Putative [LysW]-aminoadipate semialdehyde/glutamate semialdehyde transaminase from Pyrobaculum aerophilum (strain ATCC 51768 / DSM 7523 / JCM 9630 / CIP 104966 / NBRC 100827 / IM2).